The primary structure comprises 141 residues: uncharacterized protein (141 aa).

Basic and acidic residues predominate over residues Met-1–Ser-17. Residues Met-1–Asp-24 form a disordered region. A coiled-coil region spans residues Ile-52–Met-115.

This is an uncharacterized protein from Acanthamoeba polyphaga (Amoeba).